The sequence spans 837 residues: Granulocyte colony-stimulating factor receptor (837 aa).

The N-terminal stretch at 1-25 is a signal peptide; sequence MVGLGACTLTGVTLIFLLLPRSLES. 2 disulfides stabilise this stretch: C26–C52 and C46–C102. The Ig-like C2-type domain maps to 26 to 118; it reads CGHIEISPPV…SVQLLDQAEL (93 aa). Residues 26–626 are Extracellular-facing; that stretch reads CGHIEISPPV…LTLRTLDPSD (601 aa). 3 N-linked (GlcNAc...) asparagine glycosylation sites follow: N51, N94, and N129. Fibronectin type-III domains follow at residues 126–231, 236–331, 334–433, 434–529, and 530–624; these read SPSN…LEPP, LDIG…LRPT, APTI…NEGP, AVTG…GERA, and PPHA…TLDP. 5 disulfide bridges follow: C132/C143, C168/C219, C178/C187, C249/C296, and C267/C310. N-linked (GlcNAc...) asparagine glycans are attached at residues N186 and N279. The WSXWS motif signature appears at 319–323; that stretch reads WSPWS. N-linked (GlcNAc...) asparagine glycans are attached at residues N392, N408, N474, N487, N582, and N613. Residues 627-650 form a helical membrane-spanning segment; sequence LNIFLGILCLVLLSTTCVVTWLCC. At 651–837 the chain is on the cytoplasmic side; that stretch reads KRRGKTSFWS…VHGVEEQGGF (187 aa). The Box 1 motif signature appears at 658–666; it reads FWSDVPDPA.

This sequence belongs to the type I cytokine receptor family. Type 2 subfamily. As to quaternary structure, homodimer. The dimeric receptor binds two CSF3 molecules. Interacts with CEACAM1; down-regulates the CSF3R-STAT3 pathway through recruitment of PTPN6 that dephosphorylates CSF3R. In terms of processing, N-glycosylated. In terms of tissue distribution, found in bone marrow.

Its subcellular location is the membrane. Receptor for granulocyte colony-stimulating factor (CSF3). In addition it may function in some adhesion or recognition events at the cell surface. The protein is Granulocyte colony-stimulating factor receptor (Csf3r) of Mus musculus (Mouse).